Consider the following 492-residue polypeptide: Cysteine--tRNA ligase (492 aa).

Cys-31 is a Zn(2+) binding site. The short motif at Pro-33–His-43 is the 'HIGH' region element. The Zn(2+) site is built by Cys-226, His-251, and Glu-255. The short motif at Lys-283 to Ser-287 is the 'KMSKS' region element. Lys-286 serves as a coordination point for ATP.

The protein belongs to the class-I aminoacyl-tRNA synthetase family. As to quaternary structure, monomer. Zn(2+) is required as a cofactor.

It is found in the cytoplasm. It carries out the reaction tRNA(Cys) + L-cysteine + ATP = L-cysteinyl-tRNA(Cys) + AMP + diphosphate. In Azobacteroides pseudotrichonymphae genomovar. CFP2, this protein is Cysteine--tRNA ligase.